Consider the following 253-residue polypeptide: Sporulation initiation inhibitor protein Soj (253 aa).

10 residues coordinate ATP: Lys-11, Gly-12, Gly-13, Val-14, Gly-15, Lys-16, Thr-17, Thr-18, Pro-214, and Asn-216. Thr-17 is a Mg(2+) binding site.

The protein belongs to the ParA family. Dimerizes in the presence of ATP but not ADP; ATP-binding is required for double-stranded (ds)DNA-binding. Interacts with DnaA.

The protein resides in the cytoplasm. The enzyme catalyses ATP + H2O = ADP + phosphate + H(+). Functionally, acts as a spatially regulated molecular switch, capable of either inhibiting or activating the ability of DnaA to initiate DNA replication. Monomeric ADP-Soj inhibits oligomerization of DnaA on single-stranded (ss)- or double-stranded (ds)DNA, thus inhibiting DNA replication initiation; does not disassemble premade DnaA-DNA filaments. Decreases the residence time of DnaA on the chromosome at its binding sites (oriC, replication forks and (probably) promoter-binding sites). Soj forms nucleoprotein filaments in an ATP- and DNA-dependent manner. Inhibits the initiation of sporulation, Spo0J antagonizes this inhibition. Soj ultimately inhibits the activation (phosphorylation) of Spo0A. This is Sporulation initiation inhibitor protein Soj from Bacillus subtilis (strain 168).